Reading from the N-terminus, the 345-residue chain is CRISPR-associated endonuclease Cas1 1 (345 aa).

E168, H239, and E254 together coordinate a divalent metal cation.

The protein belongs to the CRISPR-associated endonuclease Cas1 family. As to quaternary structure, forms a heterotetramer with a Cas2 homodimer. Homodimer. A divalent metal cation serves as cofactor.

In terms of biological role, CRISPR (clustered regularly interspaced short palindromic repeat), is an adaptive immune system that provides protection against mobile genetic elements (viruses, transposable elements and conjugative plasmids). CRISPR clusters contain sequences complementary to antecedent mobile elements and target invading nucleic acids. CRISPR clusters are transcribed and processed into CRISPR RNA (crRNA). Involved in the integration of spacer DNA into the CRISPR cassette. Acts as a dsDNA and ssRNA nuclease, binds to linear and circular dsDNA and linear ssRNA and ssDNA. The polypeptide is CRISPR-associated endonuclease Cas1 1 (Archaeoglobus fulgidus (strain ATCC 49558 / DSM 4304 / JCM 9628 / NBRC 100126 / VC-16)).